The sequence spans 572 residues: Probable lysosomal cobalamin transporter (572 aa).

9 helical membrane-spanning segments follow: residues 8 to 28, 40 to 60, 95 to 115, 145 to 165, 188 to 208, 314 to 334, 374 to 394, 421 to 441, and 499 to 519; these read VIWF…SVFI, FVTF…MLLP, IIYY…IPFA, TLTF…APMM, AFTF…AFYT, GGFC…MTVV, IIFA…VVAV, AVLT…LVPG, and VALN…LFLA. Residues 522 to 544 form a disordered region; the sequence is GRRRGRGRESVSKHQKKRQSYMR.

This sequence belongs to the LIMR family. LMBRD1 subfamily.

The protein resides in the lysosome membrane. Functionally, probable lysosomal cobalamin transporter. Required to export cobalamin from lysosomes allowing its conversion to cofactors. This is Probable lysosomal cobalamin transporter from Aspergillus fumigatus (strain ATCC MYA-4609 / CBS 101355 / FGSC A1100 / Af293) (Neosartorya fumigata).